The following is a 91-amino-acid chain: Putative transmembrane protein ORF91a (91 aa).

A run of 3 helical transmembrane segments spans residues 17-37 (TGIS…VGLA), 40-60 (AFLG…LLFM), and 69-89 (GIGF…YIST).

Its subcellular location is the host membrane. The chain is Putative transmembrane protein ORF91a from Acidianus convivator (ABV).